Reading from the N-terminus, the 208-residue chain is Small ribosomal subunit protein uS4 (208 aa).

The S4 RNA-binding domain occupies 99 to 165; the sequence is RRLDNVVFQL…PRLKEILSSL (67 aa).

This sequence belongs to the universal ribosomal protein uS4 family. Part of the 30S ribosomal subunit. Contacts protein S5. The interaction surface between S4 and S5 is involved in control of translational fidelity.

Its function is as follows. One of the primary rRNA binding proteins, it binds directly to 16S rRNA where it nucleates assembly of the body of the 30S subunit. In terms of biological role, with S5 and S12 plays an important role in translational accuracy. The sequence is that of Small ribosomal subunit protein uS4 from Desulfitobacterium hafniense (strain DSM 10664 / DCB-2).